The following is a 488-amino-acid chain: Probable 26S proteasome non-ATPase regulatory subunit 3 (488 aa).

The tract at residues 1–20 (MTQDVEMKEQAAPPSNSLSS) is disordered. A PCI domain is found at 240–421 (SRYLFYLGKI…GWMVSKETGD (182 aa)). The interval 452–488 (FPPNSHKEKESAEKRRERQQQEQELAKHIAEEDDDDF) is disordered. Over residues 456–481 (SHKEKESAEKRRERQQQEQELAKHIA) the composition is skewed to basic and acidic residues.

This sequence belongs to the proteasome subunit S3 family. The 26S proteasome is composed of a core protease, known as the 20S proteasome, capped at one or both ends by the 19S regulatory complex (RC). The RC is composed of at least 18 different subunits in two subcomplexes, the base and the lid, which form the portions proximal and distal to the 20S proteolytic core, respectively.

Its subcellular location is the nucleus. In terms of biological role, acts as a regulatory subunit of the 26 proteasome which is involved in the ATP-dependent degradation of ubiquitinated proteins. In Nicotiana tabacum (Common tobacco), this protein is Probable 26S proteasome non-ATPase regulatory subunit 3 (21D7).